Here is a 259-residue protein sequence, read N- to C-terminus: Thiazole synthase (259 aa).

K99 acts as the Schiff-base intermediate with DXP in catalysis. 1-deoxy-D-xylulose 5-phosphate-binding positions include G160, 186-187 (AG), and 208-209 (NT).

Belongs to the ThiG family. Homotetramer. Forms heterodimers with either ThiH or ThiS.

Its subcellular location is the cytoplasm. The catalysed reaction is [ThiS sulfur-carrier protein]-C-terminal-Gly-aminoethanethioate + 2-iminoacetate + 1-deoxy-D-xylulose 5-phosphate = [ThiS sulfur-carrier protein]-C-terminal Gly-Gly + 2-[(2R,5Z)-2-carboxy-4-methylthiazol-5(2H)-ylidene]ethyl phosphate + 2 H2O + H(+). It participates in cofactor biosynthesis; thiamine diphosphate biosynthesis. Its function is as follows. Catalyzes the rearrangement of 1-deoxy-D-xylulose 5-phosphate (DXP) to produce the thiazole phosphate moiety of thiamine. Sulfur is provided by the thiocarboxylate moiety of the carrier protein ThiS. In vitro, sulfur can be provided by H(2)S. In Porphyromonas gingivalis (strain ATCC 33277 / DSM 20709 / CIP 103683 / JCM 12257 / NCTC 11834 / 2561), this protein is Thiazole synthase.